Reading from the N-terminus, the 449-residue chain is NADH-quinone oxidoreductase subunit H (449 aa).

9 helical membrane passes run 26-46 (FWLILLKGVAVFAFLLLMTLF), 96-116 (PIFILAPILSAVPAFLAFAVI), 136-156 (LPVSVLYMLAAASLGVYGLIL), 177-197 (IISYEVAMGLSFVAVFIYAGT), 211-231 (WYIALVPSFVLYCISMVGETN), 259-279 (FFFLAEYINMVTVSAIATTLF), 298-318 (WVPLIWFVLKLLLFLFFFIWL), 330-350 (FMAFGWKVLIPVGLLWVLVIA), and 365-385 (WLIGAGVVIGIMLIVALLDPG). Residues 396-449 (AERRKLAEAPSLESIPWPPPPPGGAHHRPAVPAGTSANGSSTVIPADPPPRQES) are disordered.

Belongs to the complex I subunit 1 family. As to quaternary structure, NDH-1 is composed of 14 different subunits. Subunits NuoA, H, J, K, L, M, N constitute the membrane sector of the complex.

It is found in the cell membrane. It carries out the reaction a quinone + NADH + 5 H(+)(in) = a quinol + NAD(+) + 4 H(+)(out). Functionally, NDH-1 shuttles electrons from NADH, via FMN and iron-sulfur (Fe-S) centers, to quinones in the respiratory chain. The immediate electron acceptor for the enzyme in this species is believed to be ubiquinone. Couples the redox reaction to proton translocation (for every two electrons transferred, four hydrogen ions are translocated across the cytoplasmic membrane), and thus conserves the redox energy in a proton gradient. This subunit may bind ubiquinone. This is NADH-quinone oxidoreductase subunit H from Frankia alni (strain DSM 45986 / CECT 9034 / ACN14a).